A 310-amino-acid polypeptide reads, in one-letter code: Pyrimidine-specific ribonucleoside hydrolase RihA (310 aa).

His-240 is a catalytic residue.

Belongs to the IUNH family. RihA subfamily.

Hydrolyzes cytidine or uridine to ribose and cytosine or uracil, respectively. The chain is Pyrimidine-specific ribonucleoside hydrolase RihA from Photobacterium profundum (strain SS9).